The sequence spans 228 residues: uncharacterized protein (228 aa).

Residues 194–228 (SRRADEHPAPSTEPHAAAVAPEPDFMAEPIPALEE) are disordered.

This is an uncharacterized protein from Treponema pallidum (strain Nichols).